A 546-amino-acid chain; its full sequence is DDB1- and CUL4-associated factor 11 (546 aa).

Over residues 1–19 (MGSRNSSSAGSGSGDPSEG) the composition is skewed to low complexity. The interval 1-40 (MGSRNSSSAGSGSGDPSEGLPRRGAGLRRSEEEEEEDEDV) is disordered. A phosphoserine mark is found at leucine 49 and serine 75. WD repeat units lie at residues 170 to 210 (SYSQ…RKFK), 216 to 258 (DVGW…TALD), 263 to 302 (ERRF…RTLQ), 305 to 345 (SHED…EDDP), 353 to 392 (GHQD…SREG), 435 to 480 (GVLH…KKLT), and 481 to 520 (NHKA…YFQD). The segment at 523-546 (PESEECASAPAPVPQSSTPFSSPQ) is disordered. Residues 536–546 (PQSSTPFSSPQ) are compositionally biased toward polar residues.

As to quaternary structure, interacts with DDB1 and CUL4A.

It functions in the pathway protein modification; protein ubiquitination. In terms of biological role, may function as a substrate receptor for CUL4-DDB1 E3 ubiquitin-protein ligase complex. This chain is DDB1- and CUL4-associated factor 11 (DCAF11), found in Homo sapiens (Human).